Consider the following 376-residue polypeptide: Actin, cytoplasmic (376 aa).

This sequence belongs to the actin family.

The protein resides in the cytoplasm. It localises to the cytoskeleton. It carries out the reaction ATP + H2O = ADP + phosphate + H(+). In terms of biological role, actins are highly conserved proteins that are involved in various types of cell motility and are ubiquitously expressed in all eukaryotic cells. This chain is Actin, cytoplasmic, found in Tetrahymena pyriformis.